We begin with the raw amino-acid sequence, 70 residues long: MSKEKKFEENLADLEVIVQKLENGDVALEEAIAEFQKGMKLSKELQASLDKAEKTLVKVMQEDGTETEME.

This sequence belongs to the XseB family. As to quaternary structure, heterooligomer composed of large and small subunits.

The protein localises to the cytoplasm. It carries out the reaction Exonucleolytic cleavage in either 5'- to 3'- or 3'- to 5'-direction to yield nucleoside 5'-phosphates.. In terms of biological role, bidirectionally degrades single-stranded DNA into large acid-insoluble oligonucleotides, which are then degraded further into small acid-soluble oligonucleotides. The polypeptide is Exodeoxyribonuclease 7 small subunit (Streptococcus gordonii (strain Challis / ATCC 35105 / BCRC 15272 / CH1 / DL1 / V288)).